Reading from the N-terminus, the 386-residue chain is Probable magnesium transporter NIPA5 (386 aa).

Over 1–18 (MVYSSGSWRDAYKGMSSD) the chain is Extracellular. A helical membrane pass occupies residues 19-39 (NVKGLVLALSSSIFIGASFIV). Over 40–61 (KKKGLKKAGASGLRAGSGGYSY) the chain is Cytoplasmic. Transmembrane regions (helical) follow at residues 62–82 (LLEP…IANF) and 83–103 (AAYA…SIII). Residues 104–115 (SASLAHIILQEK) are Cytoplasmic-facing. The chain crosses the membrane as a helical span at residues 116-136 (LHTFGILGCALCIVGSVTIVL). Topologically, residues 137–157 (HAPQEQDIVSVLEVWNLATEP) are extracellular. The helical transmembrane segment at 158–178 (AFLFYAAAVVGAAIVLIVQFI) threads the bilayer. Topologically, residues 179 to 189 (PLYGQSHVMVY) are cytoplasmic. A helical membrane pass occupies residues 190–210 (IGVCSLIGSLSVMSVKALGIA). Residues 211 to 220 (LKLTFSGTNQ) are Extracellular-facing. The chain crosses the membrane as a helical span at residues 221 to 241 (LGYPQTWVFTVIVLFCVITQM). Residues 242 to 255 (NYLNKALDTFNTAV) lie on the Cytoplasmic side of the membrane. Residues 256–276 (VSPIYYVMFTSLTILASVIMF) traverse the membrane as a helical segment. At 277 to 283 (KDWDRQS) the chain is on the extracellular side. Residues 284 to 304 (GTQIMTELCGFVTILSGTFLL) traverse the membrane as a helical segment. Residues 305–386 (HTTTDMVDGE…LRRQESSLRS (82 aa)) are Cytoplasmic-facing. Positions 352–386 (RQESAKSPRPARQNKQLEDDLEAVPLRRQESSLRS) are disordered. Over residues 376 to 386 (PLRRQESSLRS) the composition is skewed to basic and acidic residues.

It belongs to the NIPA (TC 2.A.7) family. In terms of assembly, homodimer.

The protein localises to the cell membrane. The protein resides in the early endosome. Functionally, acts as a Mg(2+) transporter. Can also transport other divalent cations such as Fe(2+), Sr(2+), Ba(2+), Mn(2+) and Co(2+) but to a much less extent than Mg(2+). This Arabidopsis thaliana (Mouse-ear cress) protein is Probable magnesium transporter NIPA5.